A 714-amino-acid chain; its full sequence is Developmentally-regulated protein kinase 1 (714 aa).

Disordered regions lie at residues 88–122 (NNNI…NNFN) and 174–266 (CNMI…IINN). Low complexity-rich tracts occupy residues 174 to 200 (CNMI…NNNN), 209 to 227 (PSSN…TTSS), and 240 to 266 (NFNQ…IINN). A Protein kinase domain is found at 334–589 (FNFYGSLGSG…SCSIRNHKWF (256 aa)). ATP contacts are provided by residues 340–348 (LGSGSFGTA) and Lys-363. Asp-457 acts as the Proton acceptor in catalysis. Phosphothreonine is present on Thr-488.

It belongs to the protein kinase superfamily. AGC Ser/Thr protein kinase family.

The enzyme catalyses L-seryl-[protein] + ATP = O-phospho-L-seryl-[protein] + ADP + H(+). The catalysed reaction is L-threonyl-[protein] + ATP = O-phospho-L-threonyl-[protein] + ADP + H(+). The chain is Developmentally-regulated protein kinase 1 (pkaD) from Dictyostelium discoideum (Social amoeba).